Reading from the N-terminus, the 657-residue chain is C4-dicarboxylate transport sensor protein DctS (657 aa).

Topologically, residues 1 to 26 (MRDTTGGPAGAEVWTVPGLLGARKLD) are cytoplasmic. Residues 27–51 (LLALIPLVAIVALMTLVGALLFAVA) form a helical membrane-spanning segment. Residues 52–252 (QSDANRARAK…AYDAPDAFGN (201 aa)) lie on the Periplasmic side of the membrane. A helical transmembrane segment spans residues 253–273 (AALLAAIGALSVFAVLAMVVL). Residues 274–657 (HRNALRRRMA…LPVPQEGAPA (384 aa)) are Cytoplasmic-facing. A PAS domain is found at 289–361 (AEMAFRRAME…ARQRQLIEGQ (73 aa)). The region spanning 365 to 417 (QAFETRFRRSDGSEIEVQVFEAPLIDAGGRHRGWMGSVIDITQAKQAARLARA) is the PAC domain. The interval 407–422 (QAKQAARLARAQDESL) is inter-domain linker. The Histidine kinase domain maps to 437 to 652 (TLAHELNQPL…VFTVTLPVPQ (216 aa)). His440 is subject to Phosphohistidine; by autocatalysis.

It localises to the cell inner membrane. It carries out the reaction ATP + protein L-histidine = ADP + protein N-phospho-L-histidine.. Functionally, member of the two-component regulatory system DctS/DctR involved in the transport of C4-dicarboxylates. DctS functions as a membrane-associated protein kinase that phosphorylates DctR in response to environmental signals. In Rhodobacter capsulatus (Rhodopseudomonas capsulata), this protein is C4-dicarboxylate transport sensor protein DctS (dctS).